A 1401-amino-acid polypeptide reads, in one-letter code: Alpha-latrotoxin-Lt1a (1401 aa).

An N-terminal signal peptide occupies residues 1–20 (MISVGEIMERANHSLVRMRR). A furin-like endopeptidase recognition region region spans residues 17–20 (RMRR). The interval 238-257 (VLYALLYGTQTYVSVMFFLL) is helix H8 is the probable transmembrane region of the tetrameric pore inserted in the target cell membrane. Cys-413 and Cys-1066 are oxidised to a cystine. ANK repeat units lie at residues 458–489 (LYNA…ATFD), 490–521 (HGRT…ELNQ), 525–554 (KGYT…SINS), 559–589 (FLQT…NINE), 593–622 (DGFT…DVNA), 626–656 (TGLT…DINA), 660–690 (NNIT…NANV), 695–723 (GLLS…NVNV), 729–758 (GGIT…NIEQ), 762–791 (EKYT…NFEA), 795–824 (SGAT…NWRD), 828–857 (NGQM…TVVD), 862–891 (NSDT…DINT), 895–924 (KGLA…NVYI), 928–957 (DGMN…KFEW), 971–1003 (EECA…GNFA), 1004–1033 (ICGP…SVDG), 1035–1064 (KTDT…KVNH), 1068–1097 (NGMT…DFRR), 1101–1131 (RGTT…DINI), 1137–1166 (DKDT…DVTI), and 1170–1199 (YDKT…KFRR). The 4C4.1 epitope stretch occupies residues 1026 to 1032 (EEFLSVD). A furin-like endopeptidase recognition region region spans residues 1196–1199 (KFRR). Residues 1200–1401 (EYKSSYGERS…SDGILTKKLM (202 aa)) constitute a propeptide that is removed on maturation.

Belongs to the cationic peptide 01 (latrotoxin) family. 03 (alpha-latrotoxin) subfamily. As to quaternary structure, homotetramer in membranes. In terms of processing, processed by furin-like proteases at both the N- and C-termini. As to expression, expressed in venom gland, cephalothorax, and abdomen tissues from both males and females.

It is found in the secreted. It localises to the target cell membrane. Presynaptic neurotoxin that causes massive release of neurotransmitters from vertebrate (but not invertebrate) nerve terminals and endocrine cells via a complex mechanism involving activation of receptor(s) and toxin insertion into the plasma membrane with subsequent pore formation. Binds to neurexin-1-alpha (NRXN1) in a calcium dependent manner, adhesion G protein-coupled receptor L1 (ADGRL1, also termed latrophilin-1 and calcium-independent receptor of latrotoxin (CIRL)), and receptor-type tyrosine-protein phosphatase S (PTPRS), also termed PTP sigma. NRXN1 and PTPRS are suggested to provide a platform for binding and subsequent pore formation events. In contrast, binding to ADGRL1 does not involve oligomerization and channel formation, but direct downstream stimulation of the synaptic fusion machinery. The chain is Alpha-latrotoxin-Lt1a from Latrodectus tredecimguttatus (Mediterranean black widow spider).